We begin with the raw amino-acid sequence, 338 residues long: Ketol-acid reductoisomerase (NADP(+)) (338 aa).

Positions 1-181 (MKVFYDKDAD…GGGRAGIIET (181 aa)) constitute a KARI N-terminal Rossmann domain. Residues 24–27 (YGSQ), Arg47, and Ser52 each bind NADP(+). His107 is an active-site residue. Gly133 is an NADP(+) binding site. In terms of domain architecture, KARI C-terminal knotted spans 182–327 (NFREETETDL…SKLRAMMPWI (146 aa)). Mg(2+) is bound by residues Asp190, Glu194, Glu226, and Glu230. Residue Ser251 participates in substrate binding.

This sequence belongs to the ketol-acid reductoisomerase family. The cofactor is Mg(2+).

The enzyme catalyses (2R)-2,3-dihydroxy-3-methylbutanoate + NADP(+) = (2S)-2-acetolactate + NADPH + H(+). The catalysed reaction is (2R,3R)-2,3-dihydroxy-3-methylpentanoate + NADP(+) = (S)-2-ethyl-2-hydroxy-3-oxobutanoate + NADPH + H(+). It participates in amino-acid biosynthesis; L-isoleucine biosynthesis; L-isoleucine from 2-oxobutanoate: step 2/4. It functions in the pathway amino-acid biosynthesis; L-valine biosynthesis; L-valine from pyruvate: step 2/4. In terms of biological role, involved in the biosynthesis of branched-chain amino acids (BCAA). Catalyzes an alkyl-migration followed by a ketol-acid reduction of (S)-2-acetolactate (S2AL) to yield (R)-2,3-dihydroxy-isovalerate. In the isomerase reaction, S2AL is rearranged via a Mg-dependent methyl migration to produce 3-hydroxy-3-methyl-2-ketobutyrate (HMKB). In the reductase reaction, this 2-ketoacid undergoes a metal-dependent reduction by NADPH to yield (R)-2,3-dihydroxy-isovalerate. The chain is Ketol-acid reductoisomerase (NADP(+)) from Burkholderia thailandensis (strain ATCC 700388 / DSM 13276 / CCUG 48851 / CIP 106301 / E264).